The chain runs to 595 residues: Protein kinase C iota type (595 aa).

The segment covering 1–12 has biased composition (polar residues); it reads MPTQRDSSTMSH. Residues 1–21 form a disordered region; sequence MPTQRDSSTMSHTVACGGGGD. An N-acetylproline modification is found at proline 2. Positions 2–28 are required for interaction with RAB2; sequence PTQRDSSTMSHTVACGGGGDHSHQVRV. The regulatory domain stretch occupies residues 2-252; sequence PTQRDSSTMS…KASSSLGLQD (251 aa). Threonine 3 bears the Phosphothreonine mark. Phosphoserine is present on residues serine 7 and serine 8. Residue threonine 9 is modified to Phosphothreonine. The region spanning 25 to 108 is the PB1 domain; it reads QVRVKAYYRG…SELLIHVFPC (84 aa). An interaction with PARD6A region spans residues 72–91; the sequence is DEEGDPCTVSSQLELEEAFR. A Pseudosubstrate motif is present at residues 125–134; the sequence is YRRGARRWRK. The Phorbol-ester/DAG-type zinc finger occupies 140 to 190; the sequence is GHTFQAKRFNRRAHCAICTDRIWGLGRQGYKCINCKLLVHKKCHKLVTIEC. A Protein kinase domain is found at 253 to 521; the sequence is FDLLRVIGRG…FADIQGHPFF (269 aa). Residue 259-267 participates in ATP binding; it reads IGRGSYAKV. Phosphotyrosine; by SRC occurs at positions 264 and 279. Lysine 282 contacts ATP. Tyrosine 333 carries the phosphotyrosine; by SRC modification. The active-site Proton acceptor is the aspartate 377. Threonine 411 and threonine 563 each carry phosphothreonine. One can recognise an AGC-kinase C-terminal domain in the interval 522 to 593; the sequence is RNVDWDMMEQ…INPLLMSAEE (72 aa).

Belongs to the protein kinase superfamily. AGC Ser/Thr protein kinase family. PKC subfamily. Forms a complex with SQSTM1 and MP2K5. Interacts directly with SQSTM1. Interacts with IKBKB. Interacts with PARD6A, PARD6B and PARD6G. Part of a quaternary complex containing aPKC, PARD3, a PARD6 protein (PARD6A, PARD6B or PARD6G) and a GTPase protein (CDC42 or RAC1). Part of a complex with LLGL1 and PARD6B. Interacts with ADAP1/CENTA1. Interaction with SMG1, through the ZN-finger domain, activates the kinase activity. Interacts with CDK7. Forms a complex with RAB2A and GAPDH involved in recruitment onto the membrane of vesicular tubular clusters (VTCs). Interacts with ECT2 ('Thr-359' phosphorylated form). Interacts with VAMP2. Interacts with WDFY2 (via WD repeats 1-3). Post-translationally, phosphorylation at Thr-411 in the activation loop is not mandatory for activation. Upon neuronal growth factor (NGF) stimulation, phosphorylated by SRC at Tyr-264, Tyr-279 and Tyr-333. Phosphorylation on Tyr-264 facilitates binding to KPNB1/importin-beta regulating entry of PRKCI into the nucleus. Phosphorylation on Tyr-333 is important for NF-kappa-B stimulation. Phosphorylated at Thr-563 during the initial phase of long term potentiation.

The protein resides in the cytoplasm. It localises to the membrane. It is found in the endosome. Its subcellular location is the nucleus. It carries out the reaction L-seryl-[protein] + ATP = O-phospho-L-seryl-[protein] + ADP + H(+). It catalyses the reaction L-threonyl-[protein] + ATP = O-phospho-L-threonyl-[protein] + ADP + H(+). Atypical PKCs (PRKCI and PRKCZ) exhibit an elevated basal enzymatic activity (that may be due to the interaction with SMG1 or SQSTM1) and are not regulated by diacylglycerol, phosphatidylserine, phorbol esters or calcium ions. Two specific sites, Thr-411 (activation loop of the kinase domain) and Thr-563 (turn motif), need to be phosphorylated for its full activation. Might also be a target for novel lipid activators that are elevated during nutrient-stimulated insulin secretion. Calcium- and diacylglycerol-independent serine/ threonine-protein kinase that plays a general protective role against apoptotic stimuli, is involved in NF-kappa-B activation, cell survival, differentiation and polarity, and contributes to the regulation of microtubule dynamics in the early secretory pathway. Is necessary for BCR-ABL oncogene-mediated resistance to apoptotic drug in leukemia cells, protecting leukemia cells against drug-induced apoptosis. In cultured neurons, prevents amyloid beta protein-induced apoptosis by interrupting cell death process at a very early step. In glioblastoma cells, may function downstream of phosphatidylinositol 3-kinase (PI3K) and PDPK1 in the promotion of cell survival by phosphorylating and inhibiting the pro-apoptotic factor BAD. Can form a protein complex in non-small cell lung cancer (NSCLC) cells with PARD6A and ECT2 and regulate ECT2 oncogenic activity by phosphorylation, which in turn promotes transformed growth and invasion. In response to nerve growth factor (NGF), acts downstream of SRC to phosphorylate and activate IRAK1, allowing the subsequent activation of NF-kappa-B and neuronal cell survival. Functions in the organization of the apical domain in epithelial cells by phosphorylating EZR. This step is crucial for activation and normal distribution of EZR at the early stages of intestinal epithelial cell differentiation. Forms a protein complex with LLGL1 and PARD6B independently of PARD3 to regulate epithelial cell polarity. Plays a role in microtubule dynamics in the early secretory pathway through interaction with RAB2A and GAPDH and recruitment to vesicular tubular clusters (VTCs). In human coronary artery endothelial cells (HCAEC), is activated by saturated fatty acids and mediates lipid-induced apoptosis. Downstream of PI3K is required for insulin-stimulated glucose transport. Activates RAB4A and promotes its association with KIF3A which is required for the insulin-induced SLC2A4/GLUT4 translocation in adipocytes. Is essential in early embryogenesis and development of differentiating photoreceptors by playing a role in the establishment of epithelial and neuronal polarity. Involved in early synaptic long term potentiation phase in CA1 hippocampal cells and short term memory formation. This is Protein kinase C iota type (Prkci) from Mus musculus (Mouse).